The chain runs to 319 residues: L-lactate dehydrogenase (319 aa).

NAD(+) is bound by residues V17, D38, K43, Y69, and 83–84 (GA). Residues Q86, R92, and 124 to 127 (NPVD) contribute to the substrate site. NAD(+) contacts are provided by residues 122–124 (ATN) and S147. Residue 152 to 155 (DTAR) coordinates substrate. 2 residues coordinate beta-D-fructose 1,6-bisphosphate: R157 and H172. Residue H179 is the Proton acceptor of the active site. Y224 bears the Phosphotyrosine mark. Substrate is bound at residue T233.

It belongs to the LDH/MDH superfamily. LDH family. In terms of assembly, homotetramer.

The protein localises to the cytoplasm. It catalyses the reaction (S)-lactate + NAD(+) = pyruvate + NADH + H(+). It functions in the pathway fermentation; pyruvate fermentation to lactate; (S)-lactate from pyruvate: step 1/1. Its activity is regulated as follows. Allosterically activated by fructose 1,6-bisphosphate (FBP). Its function is as follows. Catalyzes the conversion of lactate to pyruvate. This chain is L-lactate dehydrogenase, found in Bacillus licheniformis (strain ATCC 14580 / DSM 13 / JCM 2505 / CCUG 7422 / NBRC 12200 / NCIMB 9375 / NCTC 10341 / NRRL NRS-1264 / Gibson 46).